A 171-amino-acid chain; its full sequence is T-cell surface glycoprotein CD3 delta chain (171 aa).

The N-terminal stretch at 1–21 (MEHSTFLSGLVLATLLSQVSP) is a signal peptide. Topologically, residues 22–105 (FKIPIEELED…CVELDPATVA (84 aa)) are extracellular. An intrachain disulfide couples Cys-37 to Cys-73. Residues Asn-38 and Asn-74 are each glycosylated (N-linked (GlcNAc...) asparagine). A helical membrane pass occupies residues 106 to 126 (GIIVTDVIATLLLALGVFCFA). Residues 127–171 (GHETGRLSGAADTQALLRNDQVYQPLRDRDDAQYSHLGGNWARNK) are Cytoplasmic-facing. An ITAM domain is found at 138–166 (DTQALLRNDQVYQPLRDRDDAQYSHLGGN). A phosphotyrosine mark is found at Tyr-149 and Tyr-160.

The TCR-CD3 complex is composed of a CD3D/CD3E and a CD3G/CD3E heterodimers that preferentially associate with TCRalpha and TCRbeta, respectively, to form TCRalpha/CD3E/CD3G and TCRbeta/CD3G/CD3E trimers. In turn, the hexamer interacts with CD3Z homodimer to form the TCR-CD3 complex. Alternatively, TCRalpha and TCRbeta can be replaced by TCRgamma and TCRdelta. Interacts with coreceptors CD4 and CD8. In terms of processing, phosphorylated on Tyr residues after T-cell receptor triggering by LCK in association with CD4/CD8. CD3D is mostly present on T-lymphocytes with its TCR-CD3 partners. Present also in fetal NK-cells.

It localises to the cell membrane. Part of the TCR-CD3 complex present on T-lymphocyte cell surface that plays an essential role in adaptive immune response. When antigen presenting cells (APCs) activate T-cell receptor (TCR), TCR-mediated signals are transmitted across the cell membrane by the CD3 chains CD3D, CD3E, CD3G and CD3Z. All CD3 chains contain immunoreceptor tyrosine-based activation motifs (ITAMs) in their cytoplasmic domain. Upon TCR engagement, these motifs become phosphorylated by Src family protein tyrosine kinases LCK and FYN, resulting in the activation of downstream signaling pathways. In addition of this role of signal transduction in T-cell activation, CD3D plays an essential role in thymocyte differentiation. Indeed, participates in correct intracellular TCR-CD3 complex assembly and surface expression. In absence of a functional TCR-CD3 complex, thymocytes are unable to differentiate properly. Interacts with CD4 and CD8 and thus serves to establish a functional link between the TCR and coreceptors CD4 and CD8, which is needed for activation and positive selection of CD4 or CD8 T-cells. The protein is T-cell surface glycoprotein CD3 delta chain (CD3D) of Homo sapiens (Human).